A 122-amino-acid chain; its full sequence is MKKYNKSIGFYGEDLSAKFLEKDGYSILEKNFNCSSGEIDIIAIKDEIISFIEVKSRFSDSFGKPKESVTCSKQGRIINAAKYYLHIKKLYNYYIRFDVIEINFHIDSSKYELSFLKDAFRV.

The protein belongs to the UPF0102 family.

The protein is UPF0102 protein CPR_1677 of Clostridium perfringens (strain SM101 / Type A).